Reading from the N-terminus, the 149-residue chain is 3-dehydroquinate dehydratase 2 (149 aa).

Tyrosine 24 acts as the Proton acceptor in catalysis. Substrate-binding residues include asparagine 75, histidine 81, and aspartate 88. Histidine 101 serves as the catalytic Proton donor. Substrate is bound by residues 102–103 (LS) and arginine 112.

The protein belongs to the type-II 3-dehydroquinase family. As to quaternary structure, homododecamer.

It carries out the reaction 3-dehydroquinate = 3-dehydroshikimate + H2O. It participates in metabolic intermediate biosynthesis; chorismate biosynthesis; chorismate from D-erythrose 4-phosphate and phosphoenolpyruvate: step 3/7. Its function is as follows. Catalyzes a trans-dehydration via an enolate intermediate. The polypeptide is 3-dehydroquinate dehydratase 2 (aroQ2) (Pseudomonas putida (strain ATCC 47054 / DSM 6125 / CFBP 8728 / NCIMB 11950 / KT2440)).